We begin with the raw amino-acid sequence, 1268 residues long: ATP-dependent helicase/nuclease subunit A (1268 aa).

A UvrD-like helicase ATP-binding domain is found at 3–476 (TKWTEEQELA…IMLYKNFRSR (474 aa)). 24 to 31 (AAAGSGKT) is a binding site for ATP. One can recognise a UvrD-like helicase C-terminal domain in the interval 528-824 (IENLKVAGDI…RIMSIHKSKG (297 aa)).

It belongs to the helicase family. AddA subfamily. Heterodimer of AddA and AddB/RexB. Mg(2+) serves as cofactor.

It carries out the reaction Couples ATP hydrolysis with the unwinding of duplex DNA by translocating in the 3'-5' direction.. The enzyme catalyses ATP + H2O = ADP + phosphate + H(+). In terms of biological role, the heterodimer acts as both an ATP-dependent DNA helicase and an ATP-dependent, dual-direction single-stranded exonuclease. Recognizes the chi site generating a DNA molecule suitable for the initiation of homologous recombination. The AddA nuclease domain is required for chi fragment generation; this subunit has the helicase and 3' -&gt; 5' nuclease activities. This chain is ATP-dependent helicase/nuclease subunit A, found in Clostridium perfringens (strain 13 / Type A).